The following is a 643-amino-acid chain: UPF0313 protein CLD_0573 (643 aa).

A Radical SAM core domain is found at Ala295–Ser566. [4Fe-4S] cluster-binding residues include Cys309, Cys313, and Cys316. A disordered region spans residues Asn598–Lys643. Over residues Pro600 to Asn609 the composition is skewed to basic residues. Residues Ala610–Asn621 show a composition bias toward low complexity. Basic residues predominate over residues Lys630 to Lys643.

This sequence belongs to the UPF0313 family. [4Fe-4S] cluster serves as cofactor.

The polypeptide is UPF0313 protein CLD_0573 (Clostridium botulinum (strain Okra / Type B1)).